The sequence spans 118 residues: LYR motif containing protein 1 (118 aa).

Residues 91–118 (TQKGRKLRAQQRLRKQAKPVYLQSQDET) form a disordered region. A compositionally biased stretch (basic residues) spans 93–107 (KGRKLRAQQRLRKQA).

Belongs to the complex I LYR family.

In Danio rerio (Zebrafish), this protein is LYR motif containing protein 1 (lyrm1).